Reading from the N-terminus, the 588-residue chain is MITRLSTLFLRTLREDPADAEVPSHKLLVRAGYIRRVAPGIYSWLPLGLRAVRNIEAVVREEMDAIGGQELLFPALLPREPYETTQRWTEYGDSLFRLKDRKGADYLLGPTHEEMFAATVKDLYNSYKDFPVTLYQIQTKYRDEERPRAGVLRGREFVMKDSYSFDMSDAGLDESYAKHRAAYQRIFDRLGLEYAICQATSGAMGGSASEEFLAVSENGEDTFVRSTSGNYAANVEAVVTQPGVERDIEGLPEAVTYETPVSETIDALVDWANSIDVQIEGREVTAADTLKCIVVKVREPGAEEAELTGILLPGDREVDMKRLEASLEPAEVELAVESDFADNPFLVKGYVGPVGLAKNGVKVLADPRVVTGTSWITGADEKERHVVGLVAGRDFTPDGFIEAAEIKEGDPAPAGEGTLTLARGIEIGHIFQLGRKYTEAFDVQILDENGKRAIPTMGSYGLGVTRLLAVLAEQRHDDAGLNWSVEVAPYQVHVVAANKDAAAIEAAERFAAELSAAGLDVLFDDRPKVSPGVKFKDAELLGMPFALILGRGYAEGKVELRVRGGEKSELDADQAVAQIVEMVAQARN.

The protein belongs to the class-II aminoacyl-tRNA synthetase family. ProS type 1 subfamily. Homodimer.

Its subcellular location is the cytoplasm. The enzyme catalyses tRNA(Pro) + L-proline + ATP = L-prolyl-tRNA(Pro) + AMP + diphosphate. In terms of biological role, catalyzes the attachment of proline to tRNA(Pro) in a two-step reaction: proline is first activated by ATP to form Pro-AMP and then transferred to the acceptor end of tRNA(Pro). As ProRS can inadvertently accommodate and process non-cognate amino acids such as alanine and cysteine, to avoid such errors it has two additional distinct editing activities against alanine. One activity is designated as 'pretransfer' editing and involves the tRNA(Pro)-independent hydrolysis of activated Ala-AMP. The other activity is designated 'posttransfer' editing and involves deacylation of mischarged Ala-tRNA(Pro). The misacylated Cys-tRNA(Pro) is not edited by ProRS. This Corynebacterium glutamicum (strain R) protein is Proline--tRNA ligase.